The following is a 508-amino-acid chain: Glutamate--cysteine ligase, chloroplastic (508 aa).

Residues 1–59 (MTTIFRLASSSSPSLRHDATPHNFHIRKTSISNTFSFSSKNSLSFKRILTSGGSRRFIV) constitute a chloroplast transit peptide. Disulfide bonds link Cys-172-Cys-392 and Cys-335-Cys-350.

This sequence belongs to the carboxylate-amine ligase family. Glutamate--cysteine ligase type 2 subfamily. In terms of assembly, homodimer or monomer when oxidized or reduced, respectively. In terms of processing, the Cys-172-Cys-392 disulfide bridge is known to modulate the enzyme activity according to the redox status. The oxidized form constitutes the active enzyme.

Its subcellular location is the plastid. The protein resides in the chloroplast. The enzyme catalyses L-cysteine + L-glutamate + ATP = gamma-L-glutamyl-L-cysteine + ADP + phosphate + H(+). Its pathway is sulfur metabolism; glutathione biosynthesis; glutathione from L-cysteine and L-glutamate: step 1/2. The sequence is that of Glutamate--cysteine ligase, chloroplastic (GSH1) from Medicago truncatula (Barrel medic).